A 99-amino-acid polypeptide reads, in one-letter code: Ribonuclease P protein component 1 (99 aa).

Belongs to the eukaryotic/archaeal RNase P protein component 1 family. Consists of a catalytic RNA component and at least 4-5 protein subunits.

It localises to the cytoplasm. The enzyme catalyses Endonucleolytic cleavage of RNA, removing 5'-extranucleotides from tRNA precursor.. In terms of biological role, part of ribonuclease P, a protein complex that generates mature tRNA molecules by cleaving their 5'-ends. The protein is Ribonuclease P protein component 1 of Methanococcus vannielii.